Reading from the N-terminus, the 432-residue chain is Glutamate-1-semialdehyde 2,1-aminomutase 2 (432 aa).

Lysine 268 bears the N6-(pyridoxal phosphate)lysine mark.

It belongs to the class-III pyridoxal-phosphate-dependent aminotransferase family. HemL subfamily. In terms of assembly, homodimer. Pyridoxal 5'-phosphate is required as a cofactor.

Its subcellular location is the cytoplasm. The enzyme catalyses (S)-4-amino-5-oxopentanoate = 5-aminolevulinate. The protein operates within porphyrin-containing compound metabolism; protoporphyrin-IX biosynthesis; 5-aminolevulinate from L-glutamyl-tRNA(Glu): step 2/2. The protein is Glutamate-1-semialdehyde 2,1-aminomutase 2 of Listeria monocytogenes serotype 4b (strain CLIP80459).